We begin with the raw amino-acid sequence, 300 residues long: Glucose and ribitol dehydrogenase homolog (300 aa).

Over residues 1 to 14 (MASQQFPPQNQETQ) the composition is skewed to polar residues. Positions 1–23 (MASQQFPPQNQETQPGKEHAMDP) are disordered. Residue 44 to 68 (IVTGGDSGIGRAVCLCFALEGATVA) participates in NAD(+) binding. Residue S192 participates in substrate binding. Y205 serves as the catalytic Proton acceptor.

It belongs to the short-chain dehydrogenases/reductases (SDR) family.

Its function is as follows. May act as a short alcohol-polyol-sugar dehydrogenase possibly related to carbohydrate metabolism and the acquisition of desiccation tolerance. May also be involved in signal transduction. The protein is Glucose and ribitol dehydrogenase homolog of Oryza sativa subsp. japonica (Rice).